The primary structure comprises 743 residues: Catalase-peroxidase (743 aa).

Residues 1–21 (MSENHETVVSELNEESGGGCP) form a disordered region. A cross-link (tryptophyl-tyrosyl-methioninium (Trp-Tyr) (with M-257)) is located at residues 108–231 (WHSAGTYRIS…LGAVQMGLIY (124 aa)). Residue H109 is the Proton acceptor of the active site. A cross-link (tryptophyl-tyrosyl-methioninium (Tyr-Met) (with W-108)) is located at residues 231–257 (YVNPEGPNGTPDPLAAARDIRETFRRM). H272 serves as a coordination point for heme b. A disordered region spans residues 275 to 296 (GKTHGAGDPDNVGPEPEGAPLE).

The protein belongs to the peroxidase family. Peroxidase/catalase subfamily. In terms of assembly, homodimer or homotetramer. Requires heme b as cofactor. In terms of processing, formation of the three residue Trp-Tyr-Met cross-link is important for the catalase, but not the peroxidase activity of the enzyme.

The catalysed reaction is H2O2 + AH2 = A + 2 H2O. The enzyme catalyses 2 H2O2 = O2 + 2 H2O. In terms of biological role, bifunctional enzyme with both catalase and broad-spectrum peroxidase activity. This chain is Catalase-peroxidase, found in Parafrankia sp. (strain EAN1pec).